The sequence spans 125 residues: MAITKEDVLEFISNLSVLELSELVKEFEEKFGVSAAPVMVAGGAVAAGGAAAAEEKTEFNIVLVDSGDKKINVIKVVRALTGLGLKEAKDAVEGTPSVLKEGVSKDEAEAAKKELEEAGAKVELK.

This sequence belongs to the bacterial ribosomal protein bL12 family. As to quaternary structure, homodimer. Part of the ribosomal stalk of the 50S ribosomal subunit. Forms a multimeric L10(L12)X complex, where L10 forms an elongated spine to which 2 to 4 L12 dimers bind in a sequential fashion. Binds GTP-bound translation factors.

Its function is as follows. Forms part of the ribosomal stalk which helps the ribosome interact with GTP-bound translation factors. Is thus essential for accurate translation. The protein is Large ribosomal subunit protein bL12 of Campylobacter concisus (strain 13826).